Consider the following 396-residue polypeptide: Elongation factor Tu (396 aa).

The region spanning 10-205 (KSHANIGTIG…AVDEYIPTPE (196 aa)) is the tr-type G domain. Residues 19–26 (GHVDHGKT) are G1. GTP is bound at residue 19–26 (GHVDHGKT). Threonine 26 provides a ligand contact to Mg(2+). A G2 region spans residues 61–65 (GITIS). Positions 82 to 85 (DCPG) are G3. GTP contacts are provided by residues 82 to 86 (DCPGH) and 137 to 140 (NKCD). The tract at residues 137–140 (NKCD) is G4. Positions 175–177 (SAL) are G5.

This sequence belongs to the TRAFAC class translation factor GTPase superfamily. Classic translation factor GTPase family. EF-Tu/EF-1A subfamily. Monomer.

The protein resides in the cytoplasm. The enzyme catalyses GTP + H2O = GDP + phosphate + H(+). In terms of biological role, GTP hydrolase that promotes the GTP-dependent binding of aminoacyl-tRNA to the A-site of ribosomes during protein biosynthesis. This chain is Elongation factor Tu, found in Bacillus licheniformis (strain ATCC 14580 / DSM 13 / JCM 2505 / CCUG 7422 / NBRC 12200 / NCIMB 9375 / NCTC 10341 / NRRL NRS-1264 / Gibson 46).